Consider the following 638-residue polypeptide: Chaperone protein HtpG (638 aa).

The segment at 1–343 is a; substrate-binding; it reads MTSTIDSDGA…SADLPLNISR (343 aa). The interval 344–557 is b; it reads EMIQESPILA…ESGPDRQLEK (214 aa). A c region spans residues 558–638; sequence ILVGVGQLTG…VERGLRGSTA (81 aa).

It belongs to the heat shock protein 90 family. In terms of assembly, homodimer.

Its subcellular location is the cytoplasm. Functionally, molecular chaperone. Has ATPase activity. This chain is Chaperone protein HtpG, found in Nitrobacter hamburgensis (strain DSM 10229 / NCIMB 13809 / X14).